The primary structure comprises 699 residues: Elongation factor G (699 aa).

Positions Glu8–Ile283 constitute a tr-type G domain. GTP-binding positions include Ala17–Thr24, Asp81–His85, and Asn135–Asp138.

Belongs to the TRAFAC class translation factor GTPase superfamily. Classic translation factor GTPase family. EF-G/EF-2 subfamily.

Its subcellular location is the cytoplasm. Its function is as follows. Catalyzes the GTP-dependent ribosomal translocation step during translation elongation. During this step, the ribosome changes from the pre-translocational (PRE) to the post-translocational (POST) state as the newly formed A-site-bound peptidyl-tRNA and P-site-bound deacylated tRNA move to the P and E sites, respectively. Catalyzes the coordinated movement of the two tRNA molecules, the mRNA and conformational changes in the ribosome. The chain is Elongation factor G from Rickettsia conorii (strain ATCC VR-613 / Malish 7).